Here is a 124-residue protein sequence, read N- to C-terminus: Keratin-associated protein 12-2 (124 aa).

Tandem repeats lie at residues Cys-10–Ala-13, Cys-14–Ser-18, Cys-19–Cys-23, Ser-24–Pro-28, Cys-33–Leu-38, Cys-39–Cys-43, Ser-44–Thr-48, Cys-49–Thr-52, Cys-53–Ser-57, Tyr-58–Val-62, Cys-63–Thr-67, Tyr-68–Leu-72, Cys-73–Ser-77, Cys-78–Val-82, Phe-83–Ser-87, Tyr-88–Val-92, Cys-98–Gly-102, Cys-103–Ser-107, Cys-108–Val-112, and Tyr-113–Ser-117. The 20 X 5 AA approximate repeats stretch occupies residues Cys-10 to Ser-117.

The protein belongs to the KRTAP type 12 family. As to quaternary structure, interacts with hair keratins.

In terms of biological role, in the hair cortex, hair keratin intermediate filaments are embedded in an interfilamentous matrix, consisting of hair keratin-associated proteins (KRTAP), which are essential for the formation of a rigid and resistant hair shaft through their extensive disulfide bond cross-linking with abundant cysteine residues of hair keratins. The matrix proteins include the high-sulfur and high-glycine-tyrosine keratins. This chain is Keratin-associated protein 12-2, found in Bos taurus (Bovine).